A 313-amino-acid chain; its full sequence is MRMRETQGAQGRGRNAPPFLRTILAYIALTKPRVIELLLVTTIPAMLLADRGDVNPLLILNTLLGGVMAAASANTLNCVADADIDKVMKRTARRPLAMSSVTTRNALIFGVVLGVGAFAWLWWTANLLSGLLAVATIAFYVFVYTLVLKRRTAQNVVWGGAAGCMPVMIGWSAVTNTIQWPALVMFAVIFFWTPPHTWALAMRYKEDYRAAGVPMLPVIATEEKVTKLILVYTWLTVLSTLALALAAGVIYAVVAFLAGVWFLAMAHQLYSGVRKGQPIRPLRLFLQSNNYLAVVFCALAVDSVVGWPTLFQL.

The next 8 helical transmembrane spans lie at 23 to 43, 56 to 76, 107 to 127, 128 to 148, 155 to 175, 182 to 202, 243 to 263, and 291 to 311; these read ILAY…VTTI, PLLI…ANTL, LIFG…TANL, LSGL…TLVL, NVVW…SAVT, ALVM…ALAM, LALA…VWFL, and YLAV…PTLF.

This sequence belongs to the UbiA prenyltransferase family. Protoheme IX farnesyltransferase subfamily.

It is found in the cell membrane. It carries out the reaction heme b + (2E,6E)-farnesyl diphosphate + H2O = Fe(II)-heme o + diphosphate. Its pathway is porphyrin-containing compound metabolism; heme O biosynthesis; heme O from protoheme: step 1/1. Functionally, converts heme B (protoheme IX) to heme O by substitution of the vinyl group on carbon 2 of heme B porphyrin ring with a hydroxyethyl farnesyl side group. In Mycobacteroides abscessus (strain ATCC 19977 / DSM 44196 / CCUG 20993 / CIP 104536 / JCM 13569 / NCTC 13031 / TMC 1543 / L948) (Mycobacterium abscessus), this protein is Protoheme IX farnesyltransferase.